The chain runs to 135 residues: ATP synthase epsilon chain (135 aa).

The disordered stretch occupies residues threonine 101–phenylalanine 122.

This sequence belongs to the ATPase epsilon chain family. F-type ATPases have 2 components, CF(1) - the catalytic core - and CF(0) - the membrane proton channel. CF(1) has five subunits: alpha(3), beta(3), gamma(1), delta(1), epsilon(1). CF(0) has three main subunits: a, b and c.

Its subcellular location is the cellular thylakoid membrane. Its function is as follows. Produces ATP from ADP in the presence of a proton gradient across the membrane. This is ATP synthase epsilon chain from Synechococcus sp. (strain CC9311).